A 371-amino-acid chain; its full sequence is Outer membrane protein P2 (371 aa).

Positions 1–20 (MKKTLAALIVGAFAASAANA) are cleaved as a signal peptide.

Belongs to the Gram-negative porin family. Homotrimer.

The protein resides in the cell outer membrane. Forms pores that allow passive diffusion of small molecules across the outer membrane. The sequence is that of Outer membrane protein P2 (ompP2) from Haemophilus influenzae.